Consider the following 215-residue polypeptide: Cytochrome b6 (215 aa).

A helical transmembrane segment spans residues 32–52; that stretch reads IFHCLGGITLTCFLVQVATGF. Cysteine 35 contacts heme c. Positions 86 and 100 each coordinate heme b. The next 3 membrane-spanning stretches (helical) occupy residues 90-110, 116-136, and 186-206; these read ASMM…TGGF, LTWV…VTGY, and LHTF…FPMI. Heme b-binding residues include histidine 187 and histidine 202.

Belongs to the cytochrome b family. PetB subfamily. As to quaternary structure, the 4 large subunits of the cytochrome b6-f complex are cytochrome b6, subunit IV (17 kDa polypeptide, PetD), cytochrome f and the Rieske protein, while the 4 small subunits are PetG, PetL, PetM and PetN. The complex functions as a dimer. It depends on heme b as a cofactor. The cofactor is heme c.

The protein localises to the plastid. The protein resides in the chloroplast thylakoid membrane. In terms of biological role, component of the cytochrome b6-f complex, which mediates electron transfer between photosystem II (PSII) and photosystem I (PSI), cyclic electron flow around PSI, and state transitions. The sequence is that of Cytochrome b6 from Calycanthus floridus var. glaucus (Eastern sweetshrub).